The following is a 647-amino-acid chain: Exoribonuclease 2 (647 aa).

Positions 190–519 (REDLTSLPFV…NHRLLKAIIK (330 aa)) constitute an RNB domain. The S1 motif domain maps to 564–646 (EQRFSAEVID…ETRSIVARPV (83 aa)).

The protein belongs to the RNR ribonuclease family. RNase II subfamily.

The protein localises to the cytoplasm. It catalyses the reaction Exonucleolytic cleavage in the 3'- to 5'-direction to yield nucleoside 5'-phosphates.. In terms of biological role, involved in mRNA degradation. Hydrolyzes single-stranded polyribonucleotides processively in the 3' to 5' direction. This is Exoribonuclease 2 from Erwinia tasmaniensis (strain DSM 17950 / CFBP 7177 / CIP 109463 / NCPPB 4357 / Et1/99).